Here is a 161-residue protein sequence, read N- to C-terminus: Large ribosomal subunit protein uL15 (161 aa).

The disordered stretch occupies residues Met-1–Glu-50. The segment covering Arg-21–Gly-37 has biased composition (gly residues).

The protein belongs to the universal ribosomal protein uL15 family. As to quaternary structure, part of the 50S ribosomal subunit.

Its function is as follows. Binds to the 23S rRNA. The sequence is that of Large ribosomal subunit protein uL15 from Nitrobacter winogradskyi (strain ATCC 25391 / DSM 10237 / CIP 104748 / NCIMB 11846 / Nb-255).